Here is a 309-residue protein sequence, read N- to C-terminus: Ribonuclease Z (309 aa).

H63, H65, D67, H68, H141, D212, and H270 together coordinate Zn(2+). D67 serves as the catalytic Proton acceptor.

This sequence belongs to the RNase Z family. As to quaternary structure, homodimer. Requires Zn(2+) as cofactor.

The enzyme catalyses Endonucleolytic cleavage of RNA, removing extra 3' nucleotides from tRNA precursor, generating 3' termini of tRNAs. A 3'-hydroxy group is left at the tRNA terminus and a 5'-phosphoryl group is left at the trailer molecule.. Zinc phosphodiesterase, which displays some tRNA 3'-processing endonuclease activity. Probably involved in tRNA maturation, by removing a 3'-trailer from precursor tRNA. In Limosilactobacillus reuteri (strain DSM 20016) (Lactobacillus reuteri), this protein is Ribonuclease Z.